Consider the following 445-residue polypeptide: MTTILPNLPTGQKVGIAFSGGLDTSAALLWMRQKGAVPYAYTANLGQPDEPDYDEIPRRAMQYGAEAARLVDCRAQLVAEGIAALQAGAFHISTAGLTYFNTTPIGRAVTGTMLVAAMKEDGVNIWGDGSTFKGNDIERFYRYGLLTNPDLKIYKPWLDQTFIDELGGRAEMSEYMRQAGFDYKMSAEKAYSTDSNMLGATHEAKDLELLSAGIRIVQPIMGVAFWQDSVQIKAEEVTVRFEEGQPVALNGVEYADPVELLLEANRIGGRHGLGMSDQIENRIIEAKSRGIYEAPGLALLFIAYERLVTGIHNEDTIEQYRENGRKLGRLLYQGRWFDPQAIMLRETAQRWVARAITGEVTLELRRGNDYSLLNTESANLTYAPERLSMEKVENAPFTPADRIGQLTMRNLDIVDTREKLFTYVKTGLLAPSAGSALPQIKDGKK.

Residues 17-25 (AFSGGLDTS) and alanine 43 each bind ATP. Tyrosine 99 serves as a coordination point for L-citrulline. Glycine 129 and threonine 131 together coordinate ATP. Residues threonine 131, asparagine 135, and aspartate 136 each contribute to the L-aspartate site. Residue asparagine 135 participates in L-citrulline binding. Aspartate 136 lines the ATP pocket. The L-citrulline site is built by arginine 139 and serine 192. Aspartate 194 contributes to the ATP binding site. Residues threonine 201, glutamate 203, and glutamate 280 each coordinate L-citrulline.

This sequence belongs to the argininosuccinate synthase family. Type 2 subfamily. As to quaternary structure, homotetramer.

Its subcellular location is the cytoplasm. The enzyme catalyses L-citrulline + L-aspartate + ATP = 2-(N(omega)-L-arginino)succinate + AMP + diphosphate + H(+). It functions in the pathway amino-acid biosynthesis; L-arginine biosynthesis; L-arginine from L-ornithine and carbamoyl phosphate: step 2/3. The chain is Argininosuccinate synthase from Bordetella pertussis (strain Tohama I / ATCC BAA-589 / NCTC 13251).